Here is a 262-residue protein sequence, read N- to C-terminus: MRIAVIQFPGTNCEHETLVAVRECGMDGEIFRWNRPEQELCEFDGYVIPGGFSYQDRVRAGVIASKEPVMATLREEAANGKPIIGICNGFQILVESGILPFGDGVRLALAQNVMIRGGEIVRRGYYCAWTMLRHDAEEKRCSGSYILRRGEILSIPIAHAEGNLVASDRKVIERLIEDDQIVFRYCSPQGEIINEFPVNVNGSTENIAGISNPEGNVLGMMPHPERAFFAWQLPRKHPRIPGYGPGRKIFDSMKRYIEERRS.

The region spanning 2 to 238 (RIAVIQFPGT…FAWQLPRKHP (237 aa)) is the Glutamine amidotransferase type-1 domain. Cys87 acts as the Nucleophile in catalysis. Active-site residues include His223 and Glu225.

As to quaternary structure, part of the FGAM synthase complex composed of 1 PurL, 1 PurQ and 2 PurS subunits.

The protein resides in the cytoplasm. It carries out the reaction N(2)-formyl-N(1)-(5-phospho-beta-D-ribosyl)glycinamide + L-glutamine + ATP + H2O = 2-formamido-N(1)-(5-O-phospho-beta-D-ribosyl)acetamidine + L-glutamate + ADP + phosphate + H(+). The catalysed reaction is L-glutamine + H2O = L-glutamate + NH4(+). It participates in purine metabolism; IMP biosynthesis via de novo pathway; 5-amino-1-(5-phospho-D-ribosyl)imidazole from N(2)-formyl-N(1)-(5-phospho-D-ribosyl)glycinamide: step 1/2. Its function is as follows. Part of the phosphoribosylformylglycinamidine synthase complex involved in the purines biosynthetic pathway. Catalyzes the ATP-dependent conversion of formylglycinamide ribonucleotide (FGAR) and glutamine to yield formylglycinamidine ribonucleotide (FGAM) and glutamate. The FGAM synthase complex is composed of three subunits. PurQ produces an ammonia molecule by converting glutamine to glutamate. PurL transfers the ammonia molecule to FGAR to form FGAM in an ATP-dependent manner. PurS interacts with PurQ and PurL and is thought to assist in the transfer of the ammonia molecule from PurQ to PurL. This chain is Phosphoribosylformylglycinamidine synthase subunit PurQ, found in Methanothrix thermoacetophila (strain DSM 6194 / JCM 14653 / NBRC 101360 / PT) (Methanosaeta thermophila).